The following is a 337-amino-acid chain: Tryptophan--tRNA ligase 2 (337 aa).

Residues 13–15 (QPT) and 22–23 (GN) contribute to the ATP site. The 'HIGH' region signature appears at 14–23 (PTAGSFHLGN). Asp-139 lines the L-tryptophan pocket. ATP is bound by residues 151 to 153 (GED), Ile-190, and 199 to 203 (KMSKS). Positions 199-203 (KMSKS) match the 'KMSKS' region motif.

Belongs to the class-I aminoacyl-tRNA synthetase family. Homodimer.

The protein localises to the cytoplasm. The catalysed reaction is tRNA(Trp) + L-tryptophan + ATP = L-tryptophyl-tRNA(Trp) + AMP + diphosphate + H(+). Its function is as follows. Catalyzes the attachment of tryptophan to tRNA(Trp). The sequence is that of Tryptophan--tRNA ligase 2 from Streptomyces avermitilis (strain ATCC 31267 / DSM 46492 / JCM 5070 / NBRC 14893 / NCIMB 12804 / NRRL 8165 / MA-4680).